An 805-amino-acid polypeptide reads, in one-letter code: U-box domain-containing protein 32 (805 aa).

Disordered stretches follow at residues 181-205 (SNNR…SEKL) and 226-284 (EKDT…EREG). Over residues 226 to 239 (EKDTGQLEREKVEP) the composition is skewed to basic and acidic residues. The span at 245 to 257 (FSSGSSSSFGEPV) shows a compositional bias: low complexity. Residues 331–434 (LEGLCIKESS…EVNALRRLVK (104 aa)) adopt a coiled-coil conformation. Positions 460–718 (FDPSWKLGEG…FIDRMKAPEV (259 aa)) constitute a Protein kinase domain. ATP is bound by residues 466–474 (LGEGKYGSV) and Lys-487. A U-box domain is found at 734–805 (RPPSHYLCPI…LAIQDWQNQW (72 aa)).

Belongs to the protein kinase superfamily. Ser/Thr protein kinase family.

The catalysed reaction is S-ubiquitinyl-[E2 ubiquitin-conjugating enzyme]-L-cysteine + [acceptor protein]-L-lysine = [E2 ubiquitin-conjugating enzyme]-L-cysteine + N(6)-ubiquitinyl-[acceptor protein]-L-lysine.. Its pathway is protein modification; protein ubiquitination. Functionally, functions as an E3 ubiquitin ligase. In Arabidopsis thaliana (Mouse-ear cress), this protein is U-box domain-containing protein 32 (PUB32).